Reading from the N-terminus, the 788-residue chain is Endonuclease MutS2 (788 aa).

Position 334–341 (334–341 (GPNTGGKT)) interacts with ATP. Positions 713–788 (LDLRGQRYEE…GTGATIVYLQ (76 aa)) constitute a Smr domain.

It belongs to the DNA mismatch repair MutS family. MutS2 subfamily. As to quaternary structure, homodimer. Binds to stalled ribosomes, contacting rRNA.

In terms of biological role, endonuclease that is involved in the suppression of homologous recombination and thus may have a key role in the control of bacterial genetic diversity. Functionally, acts as a ribosome collision sensor, splitting the ribosome into its 2 subunits. Detects stalled/collided 70S ribosomes which it binds and splits by an ATP-hydrolysis driven conformational change. Acts upstream of the ribosome quality control system (RQC), a ribosome-associated complex that mediates the extraction of incompletely synthesized nascent chains from stalled ribosomes and their subsequent degradation. Probably generates substrates for RQC. The polypeptide is Endonuclease MutS2 (Lactobacillus johnsonii (strain CNCM I-12250 / La1 / NCC 533)).